The chain runs to 287 residues: Pyridoxal 5'-phosphate synthase subunit PdxS (287 aa).

Aspartate 21 serves as a coordination point for D-ribose 5-phosphate. Lysine 78 serves as the catalytic Schiff-base intermediate with D-ribose 5-phosphate. Glycine 150 is a binding site for D-ribose 5-phosphate. A D-glyceraldehyde 3-phosphate-binding site is contributed by arginine 162. D-ribose 5-phosphate is bound by residues glycine 211 and 232–233 (GS).

It belongs to the PdxS/SNZ family. In terms of assembly, in the presence of PdxT, forms a dodecamer of heterodimers.

The catalysed reaction is aldehydo-D-ribose 5-phosphate + D-glyceraldehyde 3-phosphate + L-glutamine = pyridoxal 5'-phosphate + L-glutamate + phosphate + 3 H2O + H(+). It participates in cofactor biosynthesis; pyridoxal 5'-phosphate biosynthesis. Its function is as follows. Catalyzes the formation of pyridoxal 5'-phosphate from ribose 5-phosphate (RBP), glyceraldehyde 3-phosphate (G3P) and ammonia. The ammonia is provided by the PdxT subunit. Can also use ribulose 5-phosphate and dihydroxyacetone phosphate as substrates, resulting from enzyme-catalyzed isomerization of RBP and G3P, respectively. The chain is Pyridoxal 5'-phosphate synthase subunit PdxS from Tropheryma whipplei (strain TW08/27) (Whipple's bacillus).